Consider the following 239-residue polypeptide: Ribonuclease PH (239 aa).

Residues Arg-86 and 124 to 126 (GTR) each bind phosphate.

Belongs to the RNase PH family. As to quaternary structure, homohexameric ring arranged as a trimer of dimers.

It carries out the reaction tRNA(n+1) + phosphate = tRNA(n) + a ribonucleoside 5'-diphosphate. Its function is as follows. Phosphorolytic 3'-5' exoribonuclease that plays an important role in tRNA 3'-end maturation. Removes nucleotide residues following the 3'-CCA terminus of tRNAs; can also add nucleotides to the ends of RNA molecules by using nucleoside diphosphates as substrates, but this may not be physiologically important. Probably plays a role in initiation of 16S rRNA degradation (leading to ribosome degradation) during starvation. This chain is Ribonuclease PH, found in Sinorhizobium medicae (strain WSM419) (Ensifer medicae).